Consider the following 514-residue polypeptide: Beta-glucosidase 21 (514 aa).

Residues 1-25 (MERPLHLLLVFLSSPWLLLLQGVSS) form the signal peptide. A beta-D-glucoside is bound by residues Gln-47 and His-147. Glu-193 acts as the Proton donor in catalysis. An intrachain disulfide couples Cys-212 to Cys-220. N-linked (GlcNAc...) asparagine glycans are attached at residues Asn-219 and Asn-224. Tyr-336 and Glu-406 together coordinate a beta-D-glucoside. The Nucleophile role is filled by Glu-406. Asn-407 carries an N-linked (GlcNAc...) asparagine glycan. A beta-D-glucoside contacts are provided by Trp-448 and Phe-465. An N-linked (GlcNAc...) asparagine glycan is attached at Asn-494.

It belongs to the glycosyl hydrolase 1 family.

It catalyses the reaction Hydrolysis of terminal, non-reducing beta-D-glucosyl residues with release of beta-D-glucose.. The protein is Beta-glucosidase 21 (BGLU21) of Oryza sativa subsp. japonica (Rice).